Here is a 216-residue protein sequence, read N- to C-terminus: 7-carboxy-7-deazaguanine synthase (216 aa).

Substrate contacts are provided by residues 12–14 (LQG) and R27. The region spanning 18 to 216 (RAGRAAVFCR…LQTHKYLGIP (199 aa)) is the Radical SAM core domain. Residues C31, C46, and C49 each coordinate [4Fe-4S] cluster. A Mg(2+)-binding site is contributed by T51. T93 is a binding site for substrate. Residues G95, 136–138 (SPK), and 176–179 (QPRD) contribute to the S-adenosyl-L-methionine site. P216 is a binding site for substrate.

It belongs to the radical SAM superfamily. 7-carboxy-7-deazaguanine synthase family. Homodimer. [4Fe-4S] cluster is required as a cofactor. It depends on S-adenosyl-L-methionine as a cofactor. Mg(2+) serves as cofactor.

The enzyme catalyses 6-carboxy-5,6,7,8-tetrahydropterin + H(+) = 7-carboxy-7-deazaguanine + NH4(+). It participates in purine metabolism; 7-cyano-7-deazaguanine biosynthesis. Catalyzes the complex heterocyclic radical-mediated conversion of 6-carboxy-5,6,7,8-tetrahydropterin (CPH4) to 7-carboxy-7-deazaguanine (CDG), a step common to the biosynthetic pathways of all 7-deazapurine-containing compounds. The polypeptide is 7-carboxy-7-deazaguanine synthase (Nitratidesulfovibrio vulgaris (strain ATCC 29579 / DSM 644 / CCUG 34227 / NCIMB 8303 / VKM B-1760 / Hildenborough) (Desulfovibrio vulgaris)).